The following is a 295-amino-acid chain: Foldase protein PrsA (295 aa).

The N-terminal stretch at 1–19 (MKKVLIGFASIAMAFTLAA) is a signal peptide. The N-palmitoyl cysteine moiety is linked to residue Cys-20. Cys-20 is lipidated: S-diacylglycerol cysteine. A PpiC domain is found at 136-229 (EPKVTVAQIL…YGYQVIKMIN (94 aa)).

The protein belongs to the PrsA family.

It localises to the cell membrane. The enzyme catalyses [protein]-peptidylproline (omega=180) = [protein]-peptidylproline (omega=0). Functionally, plays a major role in protein secretion by helping the post-translocational extracellular folding of several secreted proteins. In Pediococcus pentosaceus (strain ATCC 25745 / CCUG 21536 / LMG 10740 / 183-1w), this protein is Foldase protein PrsA.